The chain runs to 185 residues: Potassium-transporting ATPase KdpC subunit (185 aa).

A helical membrane pass occupies residues 14–34 (ALSLLTGVAYPLALTGIAAVI).

The protein belongs to the KdpC family. In terms of assembly, the system is composed of three essential subunits: KdpA, KdpB and KdpC.

Its subcellular location is the cell inner membrane. In terms of biological role, part of the high-affinity ATP-driven potassium transport (or Kdp) system, which catalyzes the hydrolysis of ATP coupled with the electrogenic transport of potassium into the cytoplasm. This subunit acts as a catalytic chaperone that increases the ATP-binding affinity of the ATP-hydrolyzing subunit KdpB by the formation of a transient KdpB/KdpC/ATP ternary complex. This Cereibacter sphaeroides (strain KD131 / KCTC 12085) (Rhodobacter sphaeroides) protein is Potassium-transporting ATPase KdpC subunit.